The chain runs to 570 residues: MTKSRDQTHQEGCCGSLANYLTSAKFLLYLGHSLSTWGDRMWHFAVSVFLVELYGNSLLLTAVYGLVVAGSVLVLGAIIGDWVDKNARLKVAQTSLVVQNVSVILCGIILMMVFLHKNELLNMYHGWVLTVCYILIITIANIANLASTATAITIQRDWIVVVAGENRSRLADMNATIRRIDQLTNILAPMAVGQIMTFGSPVIGCGFISGWNLVSMCVEYFLLWKVYQKTPALAVKAALKVEESELKQLTSPKDTEPKPLEGTHLMGEKDSNIRELECEQEPTCASQIAEPFRTFRDGWVSYYNQPVFLAGMGLAFLYMTVLGFDCITTGYAYTQGLSGSILSVLMGASAITGIMGTVAFTWLRRKCGLVRTGLFSGLAQLSCLILCVISVFMPGSPLDLSVSPFEDIRSRFIHEEAVSSTTKIPETEMLMSNVSNVVNTVHEMSTKSVPIISVSLLFAGVIAARIGLWSFDLTVTQLLQENVIESERGIINGVQNSMNYLLDLLHFIMVILAPNPEAFGLLVLISVSFVAMGHLMYFRFAQKTLGNQIFVCAPDEKEVTDESQPNTSVV.

Topologically, residues 1-23 (MTKSRDQTHQEGCCGSLANYLTS) are cytoplasmic. A helical membrane pass occupies residues 24–53 (AKFLLYLGHSLSTWGDRMWHFAVSVFLVEL). 2 residues coordinate Fe cation: Asp39 and His43. Residues 54–57 (YGNS) lie on the Extracellular side of the membrane. A helical transmembrane segment spans residues 58–84 (LLLTAVYGLVVAGSVLVLGAIIGDWVD). Topologically, residues 85–87 (KNA) are cytoplasmic. A helical transmembrane segment spans residues 88–118 (RLKVAQTSLVVQNVSVILCGIILMMVFLHKN). Residues 119–126 (ELLNMYHG) lie on the Extracellular side of the membrane. A helical membrane pass occupies residues 127 to 162 (WVLTVCYILIITIANIANLASTATAITIQRDWIVVV). The Cytoplasmic segment spans residues 163-164 (AG). The helical transmembrane segment at 165-195 (ENRSRLADMNATIRRIDQLTNILAPMAVGQI) threads the bilayer. The Extracellular segment spans residues 196 to 202 (MTFGSPV). The chain crosses the membrane as a helical span at residues 203–229 (IGCGFISGWNLVSMCVEYFLLWKVYQK). Residues 230–306 (TPALAVKAAL…DGWVSYYNQP (77 aa)) are Cytoplasmic-facing. Residues 307 to 333 (VFLAGMGLAFLYMTVLGFDCITTGYAY) traverse the membrane as a helical segment. Cys326 is a binding site for Fe cation. At 334-338 (TQGLS) the chain is on the extracellular side. The helical transmembrane segment at 339-366 (GSILSVLMGASAITGIMGTVAFTWLRRK) threads the bilayer. At 367-368 (CG) the chain is on the cytoplasmic side. The helical transmembrane segment at 369 to 391 (LVRTGLFSGLAQLSCLILCVISV) threads the bilayer. The Extracellular portion of the chain corresponds to 392–452 (FMPGSPLDLS…EMSTKSVPII (61 aa)). The chain crosses the membrane as a helical span at residues 453–482 (SVSLLFAGVIAARIGLWSFDLTVTQLLQEN). At 483–487 (VIESE) the chain is on the cytoplasmic side. A helical transmembrane segment spans residues 488 to 512 (RGIINGVQNSMNYLLDLLHFIMVIL). His506 lines the Fe cation pocket. Residues 513–515 (APN) are Extracellular-facing. A helical membrane pass occupies residues 516–541 (PEAFGLLVLISVSFVAMGHLMYFRFA). Topologically, residues 542-570 (QKTLGNQIFVCAPDEKEVTDESQPNTSVV) are cytoplasmic.

The protein belongs to the ferroportin (FP) (TC 2.A.100) family. SLC40A subfamily. Identified in a complex with STOM. Interacts with HAMP; affinity of the peptide hormone HAMP for SLC40A1 increases by 80-fold in the presence of iron and the interaction promotes SLC40A1 ubiquitination and degradation. Part of a complex composed of SLC40A1/ferroportin, TF/transferrin and HEPH/hephaestin that transfers iron from cells to transferrin. Polyubiquitinated by RNF217; leading to proteasomal degradation. Under conditions of high systemic iron levels, both the hormone peptide hepcidin/HAMP and holo(iron bound)-transferrin/TF induce the ubiquitination, internalization and proteasomal degradation of SLC40A1 to control iron release from cells.

The protein resides in the cell membrane. The protein localises to the basolateral cell membrane. The enzyme catalyses Fe(2+)(in) = Fe(2+)(out). Its activity is regulated as follows. During elevated serum iron levels, liver-derived hepcidin/HAMP negatively regulates cell surface SLC40A1 by inducing its ubiquitination, internalization, and degradation. Indeed, hepcidin/HAMP affinity towards ferroportin/SLC40A1 increases by 80-fold in the presence of iron. In terms of biological role, transports Fe(2+) from the inside of a cell to the outside of the cell, playing a key role for maintaining systemic iron homeostasis. Transports iron from intestinal, splenic, hepatic cells, macrophages and erythrocytes into the blood to provide iron to other tissues. Controls therefore dietary iron uptake, iron recycling by macrophages and erythrocytes, and release of iron stores in hepatocytes. When iron is in excess in serum, circulating HAMP/hepcidin levels increase resulting in a degradation of SLC40A1, thus limiting the iron efflux to plasma. In Rattus norvegicus (Rat), this protein is Ferroportin.